The sequence spans 119 residues: Large ribosomal subunit protein uL18 (119 aa).

It belongs to the universal ribosomal protein uL18 family. In terms of assembly, part of the 50S ribosomal subunit; part of the 5S rRNA/L5/L18/L25 subcomplex. Contacts the 5S and 23S rRNAs.

In terms of biological role, this is one of the proteins that bind and probably mediate the attachment of the 5S RNA into the large ribosomal subunit, where it forms part of the central protuberance. The sequence is that of Large ribosomal subunit protein uL18 from Xanthomonas axonopodis pv. citri (strain 306).